The sequence spans 190 residues: MKSTLIIFFTLCLSMAVMARHESYYGNTKPAKLNEEKVTRVRFYLHDTLSGQNPTAVRIAHANLTGGSASPVGFGSLFVIDDPLTVGPEKHSKEIGNGQGMYVSGCKDLSKFTIVMYADLAFTAGKFNGSSISIFSRNPVAEEVGEREIAIVGGRGKFRMARGFVKVKTNKIDMKTGDAVLRYDATVYHY.

The signal sequence occupies residues 1–19 (MKSTLIIFFTLCLSMAVMA). N-linked (GlcNAc...) asparagine glycosylation is found at N63 and N128.

The protein belongs to the plant dirigent protein family. In terms of assembly, homodimer.

It is found in the secreted. Its subcellular location is the extracellular space. It localises to the apoplast. In terms of biological role, dirigent proteins impart stereoselectivity on the phenoxy radical-coupling reaction, yielding optically active lignans from two molecules of coniferyl alcohol in the biosynthesis of lignans, flavonolignans, and alkaloids and thus plays a central role in plant secondary metabolism. This Arabidopsis thaliana (Mouse-ear cress) protein is Dirigent protein 15 (DIR15).